The primary structure comprises 748 residues: Photosystem I P700 chlorophyll a apoprotein A1 (748 aa).

8 helical membrane-spanning segments follow: residues 69–92 (IFSA…FHGA), 155–178 (LYVT…FHYH), 194–218 (LNHH…HVSL), 290–308 (VAHH…GHMY), 345–368 (WHAN…HHMY), 384–410 (LSLF…IYMV), 432–454 (AIIS…LYIH), and 529–547 (FMVH…LILL). [4Fe-4S] cluster is bound by residues Cys571 and Cys580. A run of 2 helical transmembrane segments spans residues 587 to 608 (HVFL…HFSW) and 662 to 684 (LSAY…MFLF). His673 contacts chlorophyll a'. Positions 681 and 689 each coordinate chlorophyll a. Trp690 contributes to the phylloquinone binding site. A helical membrane pass occupies residues 722 to 742 (AVGVAHYLLGGIATTWAFFLA).

It belongs to the PsaA/PsaB family. As to quaternary structure, the PsaA/B heterodimer binds the P700 chlorophyll special pair and subsequent electron acceptors. PSI consists of a core antenna complex that captures photons, and an electron transfer chain that converts photonic excitation into a charge separation. The eukaryotic PSI reaction center is composed of at least 11 subunits. P700 is a chlorophyll a/chlorophyll a' dimer, A0 is one or more chlorophyll a, A1 is one or both phylloquinones and FX is a shared 4Fe-4S iron-sulfur center. is required as a cofactor.

It is found in the plastid. The protein localises to the chloroplast thylakoid membrane. The catalysed reaction is reduced [plastocyanin] + hnu + oxidized [2Fe-2S]-[ferredoxin] = oxidized [plastocyanin] + reduced [2Fe-2S]-[ferredoxin]. Its function is as follows. PsaA and PsaB bind P700, the primary electron donor of photosystem I (PSI), as well as the electron acceptors A0, A1 and FX. PSI is a plastocyanin/cytochrome c6-ferredoxin oxidoreductase, converting photonic excitation into a charge separation, which transfers an electron from the donor P700 chlorophyll pair to the spectroscopically characterized acceptors A0, A1, FX, FA and FB in turn. Oxidized P700 is reduced on the lumenal side of the thylakoid membrane by plastocyanin or cytochrome c6. The polypeptide is Photosystem I P700 chlorophyll a apoprotein A1 (Cyanidioschyzon merolae (strain NIES-3377 / 10D) (Unicellular red alga)).